Consider the following 755-residue polypeptide: Subtilisin-like protease 4 (755 aa).

Residues 1–20 (MDYFLFIALTFLLTFHVHNA) form the signal peptide. The region spanning 41-119 (YIIHVTGPEG…ISAHPQRVLH (79 aa)) is the Inhibitor I9 domain. One can recognise a Peptidase S8 domain in the interval 128–611 (FLGLQQDTGV…SGHVNPSRAN (484 aa)). Aspartate 153 acts as the Charge relay system in catalysis. Residue asparagine 182 is glycosylated (N-linked (GlcNAc...) asparagine). Histidine 217 (charge relay system) is an active-site residue. 5 N-linked (GlcNAc...) asparagine glycosylation sites follow: asparagine 297, asparagine 325, asparagine 393, asparagine 468, and asparagine 529. The PA domain occupies 376 to 461 (PLAYAGKNGK…ATHVSYAAGI (86 aa)). Catalysis depends on serine 544, which acts as the Charge relay system. 2 N-linked (GlcNAc...) asparagine glycosylation sites follow: asparagine 706 and asparagine 727.

Belongs to the peptidase S8 family.

The protein resides in the secreted. The protein localises to the extracellular space. Its subcellular location is the apoplast. Its function is as follows. Required for arbuscular mycorrhiza (AM) development during AM symbiosis with AM fungi (e.g. Glomeromycota intraradices). This chain is Subtilisin-like protease 4, found in Lotus japonicus (Lotus corniculatus var. japonicus).